We begin with the raw amino-acid sequence, 563 residues long: NAD-dependent malic enzyme (563 aa).

Catalysis depends on Y101, which acts as the Proton donor. R154 lines the NAD(+) pocket. Residue K172 is the Proton acceptor of the active site. A divalent metal cation contacts are provided by E243, D244, and D267. Residues D267 and N416 each coordinate NAD(+).

The protein belongs to the malic enzymes family. Homotetramer. It depends on Mg(2+) as a cofactor. Requires Mn(2+) as cofactor.

It catalyses the reaction (S)-malate + NAD(+) = pyruvate + CO2 + NADH. It carries out the reaction oxaloacetate + H(+) = pyruvate + CO2. The polypeptide is NAD-dependent malic enzyme (Pseudomonas savastanoi pv. phaseolicola (strain 1448A / Race 6) (Pseudomonas syringae pv. phaseolicola (strain 1448A / Race 6))).